The sequence spans 79 residues: Panulirin (79 aa).

Residues 1–22 (MKNKAVLMLMALFLVAVTQVHG) form the signal peptide. Positions 23-26 (DPEP) are excised as a propeptide. Intrachain disulfides connect C33-C63, C40-C56, and C46-C64. A propeptide spanning residues 75–79 (QLLAA) is cleaved from the precursor.

As to quaternary structure, monomer. In terms of processing, contains 3 disulfide bonds. Expressed in hemocytes (at protein level).

Involved in the melanization cascade in response to lipopolysaccharide (LPS). In vitro, reversibly and competitively inhibits trypsin (Ki=8.6 nM) but not serine proteases chymotrypsin, elastase, subtilisin, thrombin and plasmin, cysteine peptidase papain or metallopeptidase carboxypeptidase A. The protein is Panulirin of Panulirus argus (Caribbean spiny lobster).